A 496-amino-acid chain; its full sequence is Rhamnulokinase (496 aa).

13-17 (ASSGR) lines the ATP pocket. Substrate contacts are provided by residues G83 and 236 to 238 (HDT). Catalysis depends on D237, which acts as the Proton acceptor. T259 contacts ATP. N296 is a substrate binding site. Q304 serves as a coordination point for ATP. C353 and C370 are oxidised to a cystine. G402 serves as a coordination point for ATP. Residues C413 and C417 are joined by a disulfide bond.

Belongs to the rhamnulokinase family. The cofactor is Mg(2+).

It catalyses the reaction L-rhamnulose + ATP = L-rhamnulose 1-phosphate + ADP + H(+). The protein operates within carbohydrate degradation; L-rhamnose degradation; glycerone phosphate from L-rhamnose: step 2/3. Its function is as follows. Involved in the catabolism of L-rhamnose (6-deoxy-L-mannose). Catalyzes the transfer of the gamma-phosphate group from ATP to the 1-hydroxyl group of L-rhamnulose to yield L-rhamnulose 1-phosphate. This is Rhamnulokinase from Pectobacterium carotovorum subsp. carotovorum (strain PC1).